The chain runs to 567 residues: Hexose transporter HXT16 (567 aa).

Residues 1–19 (MASEQSSPEINADNLNSSA) are compositionally biased toward polar residues. The segment at 1–32 (MASEQSSPEINADNLNSSAADVHVQPPGEKEW) is disordered. The Cytoplasmic portion of the chain corresponds to 1 to 55 (MASEQSSPEINADNLNSSAADVHVQPPGEKEWSDGFYDKEVINGNTPDAPKRGFL). The helical transmembrane segment at 56–76 (GYLIIYLLCYPVSFGGFLPGW) threads the bilayer. Residues 77-112 (DSGITAGFINMDNFKMNFGSYKHSTGEYYLSNVRMG) are Extracellular-facing. The helical transmembrane segment at 113–133 (LLVAMFSVGCSIGGVAFARLA) threads the bilayer. The Cytoplasmic segment spans residues 134–139 (DTLGRR). Residues 140–160 (LAIVIVVLVYMVGAIIQISSN) form a helical membrane-spanning segment. Over 161-170 (HKWYQYFVGK) the chain is Extracellular. Residues 171-191 (IIYGLGAGGCSVLCPMLLSEI) traverse the membrane as a helical segment. Topologically, residues 192–197 (APTDLR) are cytoplasmic. The helical transmembrane segment at 198–218 (GGLVSLYQLNMTFGIFLGYCS) threads the bilayer. At 219–232 (VYGTRKYSNTAQWR) the chain is on the extracellular side. A helical transmembrane segment spans residues 233–253 (IPVGLCFLWALIIIVGMLLVP). At 254-336 (ESPRYLIECE…VQTFLQLTGE (83 aa)) the chain is on the cytoplasmic side. A helical transmembrane segment spans residues 337–353 (NYFFFYGTTIFKSVGLT). Over 354–359 (DGFETS) the chain is Extracellular. The chain crosses the membrane as a helical span at residues 360 to 377 (IVLGTVNFFSTIIAVMVV). Over 378-384 (DKIGRRK) the chain is Cytoplasmic. The chain crosses the membrane as a helical span at residues 385–405 (CLLFGAASMMACMVIFASIGV). Residues 406–427 (KCLYPHGQDGPSSKGAGNAMIV) lie on the Extracellular side of the membrane. Residues 428–448 (FTCFYIFCFATTWAPVAYIVV) traverse the membrane as a helical segment. Topologically, residues 449-465 (AESFPSKVKSKAMSIST) are cytoplasmic. A helical transmembrane segment spans residues 466–486 (AFNWLWQFLIGFFTPFITGSI). Residue histidine 487 is a topological domain, extracellular. Residues 488–508 (FYYGYVFVGCLVAMFLYVFFF) form a helical membrane-spanning segment. At 509 to 567 (LPETIGLSLEETQLLYEEGIKPWKSASWVPPSRRGASSRETEAKKKSWKEVLKFPKSFN) the chain is on the cytoplasmic side. The interval 533-555 (SASWVPPSRRGASSRETEAKKKS) is disordered. Residues 545–555 (SSRETEAKKKS) are compositionally biased toward basic and acidic residues.

The protein belongs to the major facilitator superfamily. Sugar transporter (TC 2.A.1.1) family.

It is found in the membrane. Probable glucose transporter. The polypeptide is Hexose transporter HXT16 (HXT16) (Saccharomyces cerevisiae (strain ATCC 204508 / S288c) (Baker's yeast)).